A 417-amino-acid polypeptide reads, in one-letter code: Serine hydroxymethyltransferase (417 aa).

(6S)-5,6,7,8-tetrahydrofolate contacts are provided by residues Leu121 and Gly125–Leu127. The residue at position 229 (Lys229) is an N6-(pyridoxal phosphate)lysine. Ser354–Phe356 serves as a coordination point for (6S)-5,6,7,8-tetrahydrofolate.

This sequence belongs to the SHMT family. As to quaternary structure, homodimer. The cofactor is pyridoxal 5'-phosphate.

It is found in the cytoplasm. It carries out the reaction (6R)-5,10-methylene-5,6,7,8-tetrahydrofolate + glycine + H2O = (6S)-5,6,7,8-tetrahydrofolate + L-serine. It participates in one-carbon metabolism; tetrahydrofolate interconversion. The protein operates within amino-acid biosynthesis; glycine biosynthesis; glycine from L-serine: step 1/1. In terms of biological role, catalyzes the reversible interconversion of serine and glycine with tetrahydrofolate (THF) serving as the one-carbon carrier. This reaction serves as the major source of one-carbon groups required for the biosynthesis of purines, thymidylate, methionine, and other important biomolecules. Also exhibits THF-independent aldolase activity toward beta-hydroxyamino acids, producing glycine and aldehydes, via a retro-aldol mechanism. The protein is Serine hydroxymethyltransferase of Azotobacter vinelandii (strain DJ / ATCC BAA-1303).